The chain runs to 286 residues: 4-hydroxybenzoate octaprenyltransferase (286 aa).

7 consecutive transmembrane segments (helical) span residues 21–40 (GTLLLLWPCLMALMLAAGGM), 95–115 (ILFVILGLSAFGLVLLLNGLV), 142–162 (FLGIVWSWSIPMAYAAQTGEV), 167–187 (WWLFAANWCWTVAYDTMYAMV), 210–230 (QIIGLFQLAALACFIAAGWSA), 235–255 (LYGLGILTFVGFSTYQQMLIF), and 266–286 (FLNNNWAGLALFVGLGADYLI).

It belongs to the UbiA prenyltransferase family. Requires Mg(2+) as cofactor.

The protein localises to the cell inner membrane. It catalyses the reaction all-trans-octaprenyl diphosphate + 4-hydroxybenzoate = 4-hydroxy-3-(all-trans-octaprenyl)benzoate + diphosphate. It functions in the pathway cofactor biosynthesis; ubiquinone biosynthesis. In terms of biological role, catalyzes the prenylation of para-hydroxybenzoate (PHB) with an all-trans polyprenyl group. Mediates the second step in the final reaction sequence of ubiquinone-8 (UQ-8) biosynthesis, which is the condensation of the polyisoprenoid side chain with PHB, generating the first membrane-bound Q intermediate 3-octaprenyl-4-hydroxybenzoate. In Shewanella baltica (strain OS185), this protein is 4-hydroxybenzoate octaprenyltransferase.